The following is a 248-amino-acid chain: NAD(P)H-quinone oxidoreductase subunit K 1 (248 aa).

Residues 1-2 (MS) constitute a propeptide that is removed on maturation. Cys62, Cys63, Cys127, and Cys158 together coordinate [4Fe-4S] cluster. The disordered stretch occupies residues 228 to 248 (MGMPVPPALTTSQQKEQLNRG). The segment covering 236–248 (LTTSQQKEQLNRG) has biased composition (polar residues).

This sequence belongs to the complex I 20 kDa subunit family. As to quaternary structure, NDH-1 can be composed of about 15 different subunits; different subcomplexes with different compositions have been identified which probably have different functions. The cofactor is [4Fe-4S] cluster.

Its subcellular location is the cellular thylakoid membrane. It catalyses the reaction a plastoquinone + NADH + (n+1) H(+)(in) = a plastoquinol + NAD(+) + n H(+)(out). The enzyme catalyses a plastoquinone + NADPH + (n+1) H(+)(in) = a plastoquinol + NADP(+) + n H(+)(out). NDH-1 shuttles electrons from an unknown electron donor, via FMN and iron-sulfur (Fe-S) centers, to quinones in the respiratory and/or the photosynthetic chain. The immediate electron acceptor for the enzyme in this species is believed to be plastoquinone. Couples the redox reaction to proton translocation, and thus conserves the redox energy in a proton gradient. Cyanobacterial NDH-1 also plays a role in inorganic carbon-concentration. This is NAD(P)H-quinone oxidoreductase subunit K 1 from Synechocystis sp. (strain ATCC 27184 / PCC 6803 / Kazusa).